We begin with the raw amino-acid sequence, 61 residues long: Small ribosomal subunit protein uS14 (61 aa).

Zn(2+) is bound by residues cysteine 24, cysteine 27, cysteine 40, and cysteine 43.

Belongs to the universal ribosomal protein uS14 family. Zinc-binding uS14 subfamily. In terms of assembly, part of the 30S ribosomal subunit. Contacts proteins S3 and S10. The cofactor is Zn(2+).

Its function is as follows. Binds 16S rRNA, required for the assembly of 30S particles and may also be responsible for determining the conformation of the 16S rRNA at the A site. The polypeptide is Small ribosomal subunit protein uS14 (Malacoplasma penetrans (strain HF-2) (Mycoplasma penetrans)).